The primary structure comprises 495 residues: Putative aldehyde dehydrogenase DhaS (495 aa).

An NAD(+)-binding site is contributed by glycine 244–glycine 249. Active-site residues include glutamate 266 and cysteine 300.

It belongs to the aldehyde dehydrogenase family.

It catalyses the reaction an aldehyde + NAD(+) + H2O = a carboxylate + NADH + 2 H(+). The chain is Putative aldehyde dehydrogenase DhaS (dhaS) from Bacillus subtilis (strain 168).